We begin with the raw amino-acid sequence, 429 residues long: Glutamate-1-semialdehyde 2,1-aminomutase 2 (429 aa).

Residue lysine 268 is modified to N6-(pyridoxal phosphate)lysine.

This sequence belongs to the class-III pyridoxal-phosphate-dependent aminotransferase family. HemL subfamily. In terms of assembly, homodimer. Pyridoxal 5'-phosphate is required as a cofactor.

It localises to the cytoplasm. It carries out the reaction (S)-4-amino-5-oxopentanoate = 5-aminolevulinate. It functions in the pathway porphyrin-containing compound metabolism; protoporphyrin-IX biosynthesis; 5-aminolevulinate from L-glutamyl-tRNA(Glu): step 2/2. The sequence is that of Glutamate-1-semialdehyde 2,1-aminomutase 2 from Staphylococcus aureus (strain USA300).